Consider the following 712-residue polypeptide: Eukaryotic translation initiation factor 3 subunit B (712 aa).

The interval M1–M98 is sufficient for interaction with HCR1 and TIF32. The sufficient for interaction with PIC8 stretch occupies residues M1 to F224. The 88-residue stretch at N37–D124 folds into the RRM domain. WD repeat units lie at residues R191–K229, F230–A293, Q301–K339, I342–R384, E452–A493, I513–N555, and D566–T604.

Belongs to the eIF-3 subunit B family. As to quaternary structure, component of the eukaryotic translation initiation factor 3 (eIF-3) complex.

The protein resides in the cytoplasm. RNA-binding component of the eukaryotic translation initiation factor 3 (eIF-3) complex, which is involved in protein synthesis of a specialized repertoire of mRNAs and, together with other initiation factors, stimulates binding of mRNA and methionyl-tRNAi to the 40S ribosome. The eIF-3 complex specifically targets and initiates translation of a subset of mRNAs involved in cell proliferation. The chain is Eukaryotic translation initiation factor 3 subunit B from Scheffersomyces stipitis (strain ATCC 58785 / CBS 6054 / NBRC 10063 / NRRL Y-11545) (Yeast).